The sequence spans 166 residues: Cofilin-2 (166 aa).

In terms of domain architecture, ADF-H spans 4–153; that stretch reads GVTVNDEVIK…KDRSTLGEKL (150 aa). Serine 24 carries the post-translational modification Phosphoserine. The Nuclear localization signal signature appears at 30-34; sequence KKRKK.

This sequence belongs to the actin-binding proteins ADF family. The phosphorylation of Ser-24 may prevent recognition of the nuclear localization signal. In terms of tissue distribution, widely distributed in various tissues.

The protein resides in the nucleus matrix. The protein localises to the cytoplasm. Its subcellular location is the cytoskeleton. Functionally, controls reversibly actin polymerization and depolymerization in a pH-sensitive manner. It has the ability to bind G- and F-actin in a 1:1 ratio of cofilin to actin. It is the major component of intranuclear and cytoplasmic actin rods. The protein is Cofilin-2 (CFL2) of Gallus gallus (Chicken).